The sequence spans 1296 residues: DNA-directed RNA polymerase subunit beta' (1296 aa).

Cysteine 60, cysteine 62, cysteine 75, and cysteine 78 together coordinate Zn(2+). Residues 185–202 show a composition bias toward basic and acidic residues; the sequence is EEEGGKAAEKRKLRDSAD. The disordered stretch occupies residues 185-204; sequence EEEGGKAAEKRKLRDSADRQ. 3 residues coordinate Mg(2+): aspartate 535, aspartate 537, and aspartate 539. Cysteine 877, cysteine 954, cysteine 961, and cysteine 964 together coordinate Zn(2+).

It belongs to the RNA polymerase beta' chain family. As to quaternary structure, the RNAP catalytic core consists of 2 alpha, 1 beta, 1 beta' and 1 omega subunit. When a sigma factor is associated with the core the holoenzyme is formed, which can initiate transcription. Mg(2+) is required as a cofactor. Zn(2+) serves as cofactor.

The enzyme catalyses RNA(n) + a ribonucleoside 5'-triphosphate = RNA(n+1) + diphosphate. In terms of biological role, DNA-dependent RNA polymerase catalyzes the transcription of DNA into RNA using the four ribonucleoside triphosphates as substrates. The sequence is that of DNA-directed RNA polymerase subunit beta' from Kocuria rhizophila (strain ATCC 9341 / DSM 348 / NBRC 103217 / DC2201).